The sequence spans 1343 residues: DNA-directed RNA polymerase subunit beta (1343 aa).

It belongs to the RNA polymerase beta chain family. The RNAP catalytic core consists of 2 alpha, 1 beta, 1 beta' and 1 omega subunit. When a sigma factor is associated with the core the holoenzyme is formed, which can initiate transcription.

It carries out the reaction RNA(n) + a ribonucleoside 5'-triphosphate = RNA(n+1) + diphosphate. DNA-dependent RNA polymerase catalyzes the transcription of DNA into RNA using the four ribonucleoside triphosphates as substrates. The protein is DNA-directed RNA polymerase subunit beta of Shewanella piezotolerans (strain WP3 / JCM 13877).